Reading from the N-terminus, the 254-residue chain is 4-hydroxy-tetrahydrodipicolinate reductase (254 aa).

Residues 8-13 (GGSGRV), 87-89 (GTT), and 111-114 (ATNM) each bind NAD(+). The Proton donor/acceptor role is filled by His-143. Position 144 (His-144) interacts with (S)-2,3,4,5-tetrahydrodipicolinate. The active-site Proton donor is Lys-147. Residue 153-154 (GT) participates in (S)-2,3,4,5-tetrahydrodipicolinate binding.

Belongs to the DapB family.

It localises to the cytoplasm. The enzyme catalyses (S)-2,3,4,5-tetrahydrodipicolinate + NAD(+) + H2O = (2S,4S)-4-hydroxy-2,3,4,5-tetrahydrodipicolinate + NADH + H(+). It catalyses the reaction (S)-2,3,4,5-tetrahydrodipicolinate + NADP(+) + H2O = (2S,4S)-4-hydroxy-2,3,4,5-tetrahydrodipicolinate + NADPH + H(+). It functions in the pathway amino-acid biosynthesis; L-lysine biosynthesis via DAP pathway; (S)-tetrahydrodipicolinate from L-aspartate: step 4/4. Functionally, catalyzes the conversion of 4-hydroxy-tetrahydrodipicolinate (HTPA) to tetrahydrodipicolinate. This is 4-hydroxy-tetrahydrodipicolinate reductase from Nitratiruptor sp. (strain SB155-2).